A 281-amino-acid chain; its full sequence is 4-deoxy-L-threo-5-hexosulose-uronate ketol-isomerase (281 aa).

Zn(2+) contacts are provided by histidine 198, histidine 200, glutamate 205, and histidine 248.

This sequence belongs to the KduI family. Zn(2+) serves as cofactor.

It carries out the reaction 5-dehydro-4-deoxy-D-glucuronate = 3-deoxy-D-glycero-2,5-hexodiulosonate. It participates in glycan metabolism; pectin degradation; 2-dehydro-3-deoxy-D-gluconate from pectin: step 4/5. Catalyzes the isomerization of 5-dehydro-4-deoxy-D-glucuronate to 3-deoxy-D-glycero-2,5-hexodiulosonate. This Lacticaseibacillus paracasei (strain ATCC 334 / BCRC 17002 / CCUG 31169 / CIP 107868 / KCTC 3260 / NRRL B-441) (Lactobacillus paracasei) protein is 4-deoxy-L-threo-5-hexosulose-uronate ketol-isomerase.